Reading from the N-terminus, the 256-residue chain is Protein FixA (256 aa).

The protein belongs to the ETF beta-subunit/FixA family. Heterodimer of FixA and FixB.

Its pathway is amine and polyamine metabolism; carnitine metabolism. In terms of biological role, required for anaerobic carnitine reduction. May bring reductant to CaiA. The chain is Protein FixA from Salmonella paratyphi A (strain ATCC 9150 / SARB42).